The following is a 566-amino-acid chain: 4-hydroxy-7-methoxy-3-oxo-3,4-dihydro-2H-1,4-benzoxazin-2-yl glucoside beta-D-glucosidase 1, chloroplastic (566 aa).

Residues methionine 1–arginine 54 constitute a chloroplast transit peptide. Residues glycine 17–cysteine 47 form a disordered region. A beta-D-glucoside is bound by residues glutamine 92, histidine 196, and asparagine 244–glutamate 245. Glutamate 245 functions as the Proton donor in the catalytic mechanism. Cysteine 264 and cysteine 270 are disulfide-bonded. The segment at serine 325–arginine 361 is dimerization. An a beta-D-glucoside-binding site is contributed by tyrosine 387. Dimerization regions lie at residues asparagine 394–leucine 405 and lysine 450–asparagine 453. A beta-D-glucoside-binding positions include glutamate 460, tryptophan 511, glutamate 518 to tryptophan 519, and tyrosine 527. The Nucleophile role is filled by glutamate 460.

Belongs to the glycosyl hydrolase 1 family. As to quaternary structure, homo- and heterodimer. Expressed in all seedling parts. Most abundant in the coleoptile.

Its subcellular location is the plastid. The protein localises to the chloroplast. It catalyses the reaction Hydrolysis of terminal, non-reducing beta-D-glucosyl residues with release of beta-D-glucose.. The enzyme catalyses DIMBOA beta-D-glucoside + H2O = DIMBOA + D-glucose. The catalysed reaction is DIBOA beta-D-glucoside + H2O = DIBOA + D-glucose. Reversibly inhibited by micromolar concentrations of Hg(2+) or Ag(+), but irreversibly inhibited by alkylation in presence of urea. Competitive inhibition by p-nitrophenyl beta-D-thioglucoside (pNPTGlc), glucotetrazole, and para-hydroxy-S-mandelonitrile beta-glucoside (dhurrin). Its function is as follows. Is implicated in many functions such as ABA metabolism, hydrolysis of conjugated gibberellins, conversion of storage forms of cytokinins to active forms. Also acts in defense of young plant parts against pests via the production of hydroxamic acids from hydroxamic acid glucosides. Enzymatic activity is highly correlated with plant growth. The preferred substrate is DIMBOA-beta-D-glucoside. Hydrolyzes the chromogenic substrate 6-bromo-2-naphthyl-beta-D-glucoside (6BNGlc) and various artificial aryl beta-glucosides. No activity with cellobiose, arbutin, gentiobiose, linamarin or dhurrin as substrates. In Zea mays (Maize), this protein is 4-hydroxy-7-methoxy-3-oxo-3,4-dihydro-2H-1,4-benzoxazin-2-yl glucoside beta-D-glucosidase 1, chloroplastic (GLU1).